Consider the following 632-residue polypeptide: Biosynthetic arginine decarboxylase (632 aa).

Lys-101 is modified (N6-(pyridoxal phosphate)lysine). 281-291 (FDVGGGLGVDY) is a binding site for substrate.

This sequence belongs to the Orn/Lys/Arg decarboxylase class-II family. SpeA subfamily. It depends on Mg(2+) as a cofactor. Pyridoxal 5'-phosphate is required as a cofactor.

The enzyme catalyses L-arginine + H(+) = agmatine + CO2. The protein operates within amine and polyamine biosynthesis; agmatine biosynthesis; agmatine from L-arginine: step 1/1. Functionally, catalyzes the biosynthesis of agmatine from arginine. In Escherichia coli O157:H7 (strain EC4115 / EHEC), this protein is Biosynthetic arginine decarboxylase.